We begin with the raw amino-acid sequence, 259 residues long: Ribosomal RNA small subunit methyltransferase A (259 aa).

The S-adenosyl-L-methionine site is built by asparagine 13, leucine 15, glycine 40, glutamate 61, aspartate 85, and asparagine 103.

This sequence belongs to the class I-like SAM-binding methyltransferase superfamily. rRNA adenine N(6)-methyltransferase family. RsmA subfamily.

It localises to the cytoplasm. The enzyme catalyses adenosine(1518)/adenosine(1519) in 16S rRNA + 4 S-adenosyl-L-methionine = N(6)-dimethyladenosine(1518)/N(6)-dimethyladenosine(1519) in 16S rRNA + 4 S-adenosyl-L-homocysteine + 4 H(+). Specifically dimethylates two adjacent adenosines (A1518 and A1519) in the loop of a conserved hairpin near the 3'-end of 16S rRNA in the 30S particle. May play a critical role in biogenesis of 30S subunits. This Neisseria meningitidis serogroup A / serotype 4A (strain DSM 15465 / Z2491) protein is Ribosomal RNA small subunit methyltransferase A.